We begin with the raw amino-acid sequence, 317 residues long: Probable cell division protein WhiA (317 aa).

A DNA-binding region (H-T-H motif) is located at residues 278 to 311; it reads SLQGLGELLDPQVGKSGVNHRLRKIGEKADELRQ.

This sequence belongs to the WhiA family.

In terms of biological role, involved in cell division and chromosome segregation. The sequence is that of Probable cell division protein WhiA from Lachnospira eligens (strain ATCC 27750 / DSM 3376 / VPI C15-48 / C15-B4) (Eubacterium eligens).